Reading from the N-terminus, the 655-residue chain is MAAGVAAWLPFARAAAIGWMPVANCPMPLAPADKSKRQDELIVLNVSGRRFQTWRTTLERYPDTLLGSTEKEFFFNEDTKEYFFDRDPEVFRCVLNFYRTGKLHYPRYECISAYDDELAFYGILPEIIGDCCYEEYKDRKRENAERLMDDNDSENNQESMPSLSFRQTMWRAFENPHTSTLALVFYYVTGFFIAVSVITNVVETVPCGTVPGSKELPCGERYSVAFFCLDTACVMIFTVEYLLRLFAAPSRYRFIRSVMSIIDVVAIMPYYIGLVMTNNEDVSGAFVTLRVFRVFRIFKFSRHSQGLRILGYTLKSCASELGFLLFSLTMAIIIFATVMFYAEKGSSASKFTSIPASFWYTIVTMTTLGYGDMVPKTIAGKIFGSICSLSGVLVIALPVPVIVSNFSRIYHQNQRADKRRAQKKARLARIRVAKTGSSNAYLHSKRNGLLNEALELTGTPEEEHMGKTASLIESQHHHLLHCLEKTTGLSYLVDDPLLSVRTSTIKNHEFIDEQMFEQNCMESSMQNYPSTRSPSLSSHAGLTTTCCSRRSKKTTHLPNSNLPATRLRSMQELSTIHIQGSEQPSLTTSRSSLNLKADDGLRPNCKTSQITTAIISIPAPPALTPEGETRPPPASPGPNTNIPSIASNVVKVSVL.

Over 1–182 (MAAGVAAWLP…FENPHTSTLA (182 aa)) the chain is Cytoplasmic. The interval 6–21 (AAWLPFARAAAIGWMP) is interaction with KCNIP1 and KCNIP2. Residues 70 to 78 (EKEFFFNED) are interaction with KCNIP1. Zn(2+)-binding residues include H104, C110, C131, and C132. At S153 the chain carries Phosphoserine. Residues 183–204 (LVFYYVTGFFIAVSVITNVVET) form a helical membrane-spanning segment. Over 205-223 (VPCGTVPGSKELPCGERYS) the chain is Extracellular. A helical transmembrane segment spans residues 224-246 (VAFFCLDTACVMIFTVEYLLRLF). The Cytoplasmic segment spans residues 247 to 253 (AAPSRYR). The chain crosses the membrane as a helical span at residues 254–277 (FIRSVMSIIDVVAIMPYYIGLVMT). Residues 278–283 (NNEDVS) are Extracellular-facing. Residues 284–306 (GAFVTLRVFRVFRIFKFSRHSQG) traverse the membrane as a helical; Voltage-sensor segment. Topologically, residues 307–318 (LRILGYTLKSCA) are cytoplasmic. A helical membrane pass occupies residues 319 to 343 (SELGFLLFSLTMAIIIFATVMFYAE). The Extracellular segment spans residues 344 to 352 (KGSSASKFT). Residues 353–366 (SIPASFWYTIVTMT) constitute an intramembrane region (helical). Positions 367, 368, 369, and 370 each coordinate K(+). A Selectivity filter motif is present at residues 367–372 (TLGYGD). Residues 367–374 (TLGYGDMV) lie within the membrane without spanning it. A helical membrane pass occupies residues 378 to 400 (IAGKIFGSICSLSGVLVIALPVP). At 401–655 (VIVSNFSRIY…ASNVVKVSVL (255 aa)) the chain is on the cytoplasmic side. Residue T459 is modified to Phosphothreonine. The segment at 470 to 487 (SLIESQHHHLLHCLEKTT) is interaction with KCNIP1 and KCNIP2. Residues 472–487 (IESQHHHLLHCLEKTT) form a mediates dendritic targeting region. Position 569 is a phosphoserine; by CaMK2D (S569). At S585 the chain carries Phosphoserine. The segment at 618-644 (PAPPALTPEGETRPPPASPGPNTNIPS) is disordered.

This sequence belongs to the potassium channel family. D (Shal) (TC 1.A.1.2) subfamily. Kv4.3/KCND3 sub-subfamily. As to quaternary structure, homotetramer. Heterotetramer with KCND2. Associates with the regulatory subunits KCNIP3 and KCNIP4. Interacts with KCNE1, KCNE2, SCN1B and KCNAB1 and DLG1. Component of heteromultimeric potassium channels. Identified in potassium channel complexes containing KCND1, KCND2, KCND3, KCNIP1, KCNIP2, KCNIP3, KCNIP4, DPP6 and DPP10. Interacts with KCNIP1; each KCNIP1 monomer interacts with two adjacent KCND3 subunits, through both the N-terminal inactivation ball of a KCND3 subunit and a C-terminal helix from the adjacent KCND3 subunit, clamping them together; this interaction stabilizes the tetrameric form and modulates the channel gating kinetics namely channel activation and inactivation kinetics and rate of recovery from inactivation. Interacts with DPP6; this interaction modulates the channel gating kinetics namely channel activation and inactivation kinetics and rate of recovery from inactivation. Interacts with KCNIP2; each KCNIP2 monomer interacts with two adjacent KCND3 subunits, through both the N-terminal inactivation ball of a KCND3 subunit and a C-terminal helix from the adjacent KCND3 subunit, clamping them together; this interaction modulates the channel gating kinetics. Post-translationally, regulated through phosphorylation at Ser-569 by CaMK2D. As to expression, detected in carotid body chemoreceptor cells and in frontal cortex.

The protein resides in the cell membrane. Its subcellular location is the sarcolemma. It is found in the cell projection. The protein localises to the dendrite. It carries out the reaction K(+)(in) = K(+)(out). Its function is as follows. Pore-forming (alpha) subunit of voltage-gated A-type potassium channels that mediates transmembrane potassium transport in excitable membranes, in brain and heart. In cardiomyocytes, may generate the transient outward potassium current I(To). In neurons, may conduct the transient subthreshold somatodendritic A-type potassium current (ISA). Kinetics properties are characterized by fast activation at subthreshold membrane potentials, rapid inactivation, and quick recovery from inactivation. Channel properties are modulated by interactions with regulatory subunits. Interaction with the regulatory subunits KCNIP1 or KCNIP2 modulates the channel gating kinetics namely channel activation and inactivation kinetics and rate of recovery from inactivation. Likewise, interaction with DPP6 modulates the channel gating kinetics namely channel activation and inactivation kinetics. This is A-type voltage-gated potassium channel KCND3 from Oryctolagus cuniculus (Rabbit).